We begin with the raw amino-acid sequence, 397 residues long: MEIVGCRAENNSCPFRPPAMLFHGISGGHIQGIMEEMERRSKTEARLTKGTQLNGRDAGMPPLSPEKPALCAGCGGKISDRYYLLAVDKQWHLRCLKCCECKLALESELTCFAKDGSIYCKEDYYRRFSVQRCARCHLGISASEMVMRARDSVYHLSCFTCSTCNKTLTTGDHFGMKDSLVYCRAHFETLLQGEYPPQLSYTELAAKSGGLALPYFNGTGTVQKGRPRKRKSPALGVDIVNYNSGCNENEADHLDRDQQPYPPSQKTKRMRTSFKHHQLRTMKSYFAINHNPDAKDLKQLAQKTGLTKRVLQVWFQNARAKFRRNLLRQENGGVDKADGTSLPAPPSADSGALTPPGTATTLTDLTNPTVTVVTTVTSNMDSHEPGSPSQTTLTNLF.

LIM zinc-binding domains are found at residues Ala-69–Val-130 and Gln-131–Gly-193. Disordered stretches follow at residues Glu-248–Thr-272, Glu-330–Leu-365, and Ser-378–Phe-397. The homeobox DNA-binding region spans Thr-267–Leu-326. Positions Leu-353 to Leu-365 are enriched in low complexity. Residues Ser-387–Phe-397 show a composition bias toward polar residues.

Interacts with LDB1 and LDB2. Expressed in the dorsal thalamus and inner nuclei of the cerebellum.

The protein localises to the nucleus. Involved in gonadal development. The protein is LIM/homeobox protein Lhx9 (Lhx9) of Mus musculus (Mouse).